The primary structure comprises 259 residues: UPF0246 protein PSPTO_1244 (259 aa).

This sequence belongs to the UPF0246 family.

This Pseudomonas syringae pv. tomato (strain ATCC BAA-871 / DC3000) protein is UPF0246 protein PSPTO_1244.